The primary structure comprises 35 residues: Manganese peroxidase (35 aa).

The segment covering 1–11 (LSLLGHDERVT) has biased composition (basic and acidic residues). The disordered stretch occupies residues 1 to 35 (LSLLGHDERVTPEPFDSVTAQNARGNQADVQSLPR). Residues 18–35 (VTAQNARGNQADVQSLPR) are compositionally biased toward polar residues.

Belongs to the peroxidase family. Heme b is required as a cofactor. Requires Ca(2+) as cofactor.

The catalysed reaction is 2 Mn(2+) + H2O2 + 2 H(+) = 2 Mn(3+) + 2 H2O. Functionally, has manganese peroxidase activity. The protein is Manganese peroxidase of Irpex lacteus (Milk-white toothed polypore).